Here is a 194-residue protein sequence, read N- to C-terminus: Putative 3-methyladenine DNA glycosylase (194 aa).

The protein belongs to the DNA glycosylase MPG family.

This chain is Putative 3-methyladenine DNA glycosylase, found in Anaeromyxobacter sp. (strain Fw109-5).